Reading from the N-terminus, the 45-residue chain is DVCDSLVGGRCIHNGCWCERSAPHGNCCNTSGCTARWWCPGTKFD.

4 cysteine pairs are disulfide-bonded: C3–C16, C11–C28, C18–C33, and C27–C39. W17 bears the 6'-bromotryptophan mark. Position 23 is a 4-hydroxyproline (P23). 6'-bromotryptophan is present on residues W37 and W38. At P40 the chain carries 4-hydroxyproline.

In terms of tissue distribution, expressed by the venom duct.

Its subcellular location is the secreted. Its function is as follows. Mu-conotoxins block voltage-gated sodium channels. This toxin reversibly blocks voltage-gated sodium channel in cephalopods, with no alteration in the voltage dependence of sodium conductance or on the kinetics of inactivation. This is Mu-conotoxin-like Cal 12.1.2d from Californiconus californicus (California cone).